Here is a 217-residue protein sequence, read N- to C-terminus: Ribosomal large subunit pseudouridine synthase E (217 aa).

Catalysis depends on Asp79, which acts as the Nucleophile.

Belongs to the pseudouridine synthase RsuA family.

It catalyses the reaction uridine(2457) in 23S rRNA = pseudouridine(2457) in 23S rRNA. Functionally, responsible for synthesis of pseudouridine from uracil-2457 in 23S ribosomal RNA. The chain is Ribosomal large subunit pseudouridine synthase E (rluE) from Escherichia coli O6:H1 (strain CFT073 / ATCC 700928 / UPEC).